A 350-amino-acid chain; its full sequence is Anthranilate phosphoribosyltransferase (350 aa).

Residues Gly-94, 97–98 (GD), Thr-102, 104–107 (NVST), 122–130 (KHGNRSVSS), and Ser-134 contribute to the 5-phospho-alpha-D-ribose 1-diphosphate site. Gly-94 contacts anthranilate. Ser-106 contributes to the Mg(2+) binding site. Asn-125 contributes to the anthranilate binding site. Arg-180 is a binding site for anthranilate. Residues Asp-239 and Glu-240 each coordinate Mg(2+).

This sequence belongs to the anthranilate phosphoribosyltransferase family. Homodimer. It depends on Mg(2+) as a cofactor.

The catalysed reaction is N-(5-phospho-beta-D-ribosyl)anthranilate + diphosphate = 5-phospho-alpha-D-ribose 1-diphosphate + anthranilate. The protein operates within amino-acid biosynthesis; L-tryptophan biosynthesis; L-tryptophan from chorismate: step 2/5. In terms of biological role, catalyzes the transfer of the phosphoribosyl group of 5-phosphorylribose-1-pyrophosphate (PRPP) to anthranilate to yield N-(5'-phosphoribosyl)-anthranilate (PRA). This is Anthranilate phosphoribosyltransferase from Pelobacter propionicus (strain DSM 2379 / NBRC 103807 / OttBd1).